The chain runs to 431 residues: Histidinol dehydrogenase (431 aa).

3 residues coordinate NAD(+): Tyr-127, Gln-185, and Asn-208. 3 residues coordinate substrate: Ser-234, Gln-256, and His-259. 2 residues coordinate Zn(2+): Gln-256 and His-259. Active-site proton acceptor residues include Glu-323 and His-324. Substrate-binding residues include His-324, Asp-357, Glu-411, and His-416. Position 357 (Asp-357) interacts with Zn(2+). A Zn(2+)-binding site is contributed by His-416.

This sequence belongs to the histidinol dehydrogenase family. The cofactor is Zn(2+).

The catalysed reaction is L-histidinol + 2 NAD(+) + H2O = L-histidine + 2 NADH + 3 H(+). It participates in amino-acid biosynthesis; L-histidine biosynthesis; L-histidine from 5-phospho-alpha-D-ribose 1-diphosphate: step 9/9. Catalyzes the sequential NAD-dependent oxidations of L-histidinol to L-histidinaldehyde and then to L-histidine. This Vibrio vulnificus (strain CMCP6) protein is Histidinol dehydrogenase.